The chain runs to 430 residues: Probable aspartic-type endopeptidase ARB_07403 (430 aa).

The N-terminal stretch at 1 to 17 is a signal peptide; that stretch reads MHVSTLLVAVLLPLALS. Residues 18 to 87 constitute a propeptide, activation peptide; the sequence is KPTPRKKTGS…SKATAGSGKE (70 aa). The segment at 66-105 is disordered; sequence YHPQHISKLPGNSKATAGSGKEGVESQDEKGEVVNNPTNH. Residues 87-97 show a composition bias toward basic and acidic residues; sequence EGVESQDEKGE. The region spanning 109-427 is the Peptidase A1 domain; the sequence is FLSPVTIGGQ…DQRGPSISLA (319 aa). Asp125 is an active-site residue. An N-linked (GlcNAc...) asparagine glycan is attached at Asn306. Asp314 is an active-site residue.

Belongs to the peptidase A1 family.

It is found in the secreted. In terms of biological role, probable secreted aspartic-type endopeptidase which contributes to virulence. The polypeptide is Probable aspartic-type endopeptidase ARB_07403 (Arthroderma benhamiae (strain ATCC MYA-4681 / CBS 112371) (Trichophyton mentagrophytes)).